The primary structure comprises 471 residues: Putative multidrug resistance protein MdtD (471 aa).

Topologically, residues 1–12 are periplasmic; that stretch reads MTDLPDSTRWQL. A helical transmembrane segment spans residues 13 to 33; the sequence is WIVAFGFFMQSLDTTIVNTAI. Over 34 to 48 the chain is Cytoplasmic; the sequence is PSMAQSLGESPLHMH. Residues 49 to 69 form a helical membrane-spanning segment; sequence MVIVSYVLTVAVMLPASGWLA. The Periplasmic segment spans residues 70 to 76; the sequence is DKVGVRN. Residues 77–97 form a helical membrane-spanning segment; sequence IFFTAIVLFTLGSLFCALSGT. The Cytoplasmic segment spans residues 98 to 101; that stretch reads LNEL. The chain crosses the membrane as a helical span at residues 102-124; it reads LLARALQGVGGAMMVPVGRLTVM. Residues 125–137 are Periplasmic-facing; the sequence is KIVPREQYMAAMT. The helical transmembrane segment at 138–158 threads the bilayer; it reads FVTLPGQVGPLLGPALGGLLV. At 159-164 the chain is on the cytoplasmic side; it reads EYASWH. A helical transmembrane segment spans residues 165-185; sequence WIFLINIPVGIIGAIATLMLM. At 186 to 196 the chain is on the periplasmic side; sequence PNYTMQTRRFD. Residues 197 to 217 form a helical membrane-spanning segment; that stretch reads LSGFLLLAVGMAVLTLALDGS. Residues 218-224 are Cytoplasmic-facing; that stretch reads KGTGLSP. The helical transmembrane segment at 225–245 threads the bilayer; that stretch reads LAIAGLVAVGVVALVLYLLHA. Over 246–262 the chain is Periplasmic; that stretch reads RNNNRALFSLKLFRTRT. Residues 263 to 283 form a helical membrane-spanning segment; sequence FSLGLAGSFAGRIGSGMLPFM. The Cytoplasmic segment spans residues 284–285; it reads TP. Residues 286–306 form a helical membrane-spanning segment; it reads VFLQIGLGFSPFHAGLMMIPM. At 307–341 the chain is on the periplasmic side; that stretch reads VLGSMGMKRIVVQVVNRFGYRRVLVATTLGLSLVT. The helical transmembrane segment at 342–362 threads the bilayer; sequence LLFMTTALLGWYYVLPFVLFL. The Cytoplasmic segment spans residues 363–395; it reads QGMVNSTRFSSMNTLTLKDLPDNLASSGNSLLS. A helical transmembrane segment spans residues 396-416; it reads MIMQLSMSIGVTIAGLLLGLF. The Periplasmic segment spans residues 417 to 430; sequence GSQHVSVDSGTTQT. The chain crosses the membrane as a helical span at residues 431 to 451; the sequence is VFMYTWLSMAFIIALPAFIFA. Topologically, residues 452-471 are cytoplasmic; the sequence is RVPNDTHQNVAISRRKRSAQ.

It belongs to the major facilitator superfamily. TCR/Tet family.

It localises to the cell inner membrane. This is Putative multidrug resistance protein MdtD from Shigella flexneri serotype 5b (strain 8401).